The sequence spans 271 residues: Eukaryotic translation initiation factor 2 subunit beta (271 aa).

The segment at 223–247 (CLGCQSPDTILSKENRLFFLRCEKC) adopts a C4-type zinc-finger fold.

Belongs to the eIF-2-beta/eIF-5 family. As to quaternary structure, eukaryotic translation initiation factor 2 eIF2 is a heterotrimeric complex composed of an alpha, a beta and a gamma subunit.

Its subcellular location is the cytoplasm. The protein localises to the cytosol. Its function is as follows. Component of the eIF2 complex that functions in the early steps of protein synthesis by forming a ternary complex with GTP and initiator tRNA. This complex binds to a 40S ribosomal subunit, followed by mRNA binding to form a 43S pre-initiation complex (43S PIC). Junction of the 60S ribosomal subunit to form the 80S initiation complex is preceded by hydrolysis of the GTP bound to eIF2 and release of an eIF2-GDP binary complex. In order for eIF2 to recycle and catalyze another round of initiation, the GDP bound to eIF2 must exchange with GTP by way of a reaction catalyzed by eIF2B. This Malus domestica (Apple) protein is Eukaryotic translation initiation factor 2 subunit beta.